We begin with the raw amino-acid sequence, 484 residues long: Trigger factor (484 aa).

Residues 165 to 244 (GDFVQIDLTA…VQSVKERELP (80 aa)) enclose the PPIase FKBP-type domain. A disordered region spans residues 429–484 (DAVSEEPADADAEAVVADAPAEEAAEAPAAEEAPAEKPKKKAPAKKKASEKAADSE). A compositionally biased stretch (acidic residues) spans 430–440 (AVSEEPADADA). Residues 475–484 (KASEKAADSE) are compositionally biased toward basic and acidic residues.

The protein belongs to the FKBP-type PPIase family. Tig subfamily.

It is found in the cytoplasm. It catalyses the reaction [protein]-peptidylproline (omega=180) = [protein]-peptidylproline (omega=0). In terms of biological role, involved in protein export. Acts as a chaperone by maintaining the newly synthesized protein in an open conformation. Functions as a peptidyl-prolyl cis-trans isomerase. This is Trigger factor from Clavibacter michiganensis subsp. michiganensis (strain NCPPB 382).